Here is an 89-residue protein sequence, read N- to C-terminus: Small ribosomal subunit protein bS16 (89 aa).

It belongs to the bacterial ribosomal protein bS16 family.

In Gloeobacter violaceus (strain ATCC 29082 / PCC 7421), this protein is Small ribosomal subunit protein bS16.